Here is a 238-residue protein sequence, read N- to C-terminus: tRNA (guanine-N(7)-)-methyltransferase (238 aa).

S-adenosyl-L-methionine-binding residues include glutamate 68, glutamate 93, aspartate 120, and aspartate 143. Aspartate 143 is a catalytic residue. Substrate contacts are provided by residues lysine 147, aspartate 179, and 216-219; that span reads TKFE.

It belongs to the class I-like SAM-binding methyltransferase superfamily. TrmB family. As to quaternary structure, monomer.

It catalyses the reaction guanosine(46) in tRNA + S-adenosyl-L-methionine = N(7)-methylguanosine(46) in tRNA + S-adenosyl-L-homocysteine. It functions in the pathway tRNA modification; N(7)-methylguanine-tRNA biosynthesis. Catalyzes the formation of N(7)-methylguanine at position 46 (m7G46) in tRNA. The chain is tRNA (guanine-N(7)-)-methyltransferase from Edwardsiella ictaluri (strain 93-146).